The chain runs to 499 residues: Probable UTP--glucose-1-phosphate uridylyltransferase (499 aa).

Residues 108–111 (LNGG), lysine 122, glutamine 185, and glycine 214 each bind UTP. Residue 110–111 (GG) participates in substrate binding. Substrate is bound by residues histidine 215 and 243–245 (NID). Positions 245 and 387 each coordinate UTP.

It belongs to the UDPGP type 1 family.

Its subcellular location is the cytoplasm. It localises to the nucleus. The enzyme catalyses alpha-D-glucose 1-phosphate + UTP + H(+) = UDP-alpha-D-glucose + diphosphate. Plays a central role as a glucosyl donor in cellular metabolic pathways. The protein is Probable UTP--glucose-1-phosphate uridylyltransferase of Schizosaccharomyces pombe (strain 972 / ATCC 24843) (Fission yeast).